Reading from the N-terminus, the 434-residue chain is MIWEIPIIGDFITKPFKAAKLYEFYDRLHLFTVYLLGFFVLLTGAKQHFGNPIDCMLPKQHDDLKSWRDYIHNFCLFYGTFRYDVSNGTSEFGSYTEDASVNYYQWVPFFFAFQVCCFLLPFWCWAYMQKLIYIDMAFIVDYSGKINSEKTFEKTKEKVDRIVNYMHDHFKFRRAHKMGYLSWITFNSAFPSVLYSLTKLFFITNVIIQVNLVCKFLDVDSWTWGFDLLGKFIHPTPRAPEFSSFSDKQRFAAILTDGSYNRFQYFPILVGCEYQLQESVSNFVNHKAQCIIPMNVINEKIFIGLYFWLLVLTALSVIGTVKWILRIKSKKLNEVMIYKLIKKSLEREPFDSNIHDHRYNFVHKYLCADGILLIYFMMDTNGFLKTEEVIGALFKKYCSDAGLEPLQTAPTLTSSPRDLAYSETNYGFAAPQKI.

The next 4 membrane-spanning stretches (helical) occupy residues 30–50, 106–126, 301–321, and 365–385; these read LFTVYLLGFFVLLTGAKQHFG, WVPFFFAFQVCCFLLPFWCWA, IFIGLYFWLLVLTALSVIGTV, and YLCADGILLIYFMMDTNGFLK.

Belongs to the pannexin family.

The protein localises to the cell membrane. It localises to the cell junction. Its subcellular location is the gap junction. Its function is as follows. Structural component of the gap junctions. The polypeptide is Innexin-14 (inx-14) (Caenorhabditis elegans).